The following is a 239-amino-acid chain: Vesicle-associated protein 1-2 (239 aa).

The residue at position 1 (Met-1) is an N-acetylmethionine. Residues 1–215 (MSNELLTIDP…RRESKRSKSG (215 aa)) lie on the Cytoplasmic side of the membrane. At Ser-2 the chain carries N-acetylserine; in Vesicle-associated protein 1-2, N-terminally processed. An MSP domain is found at 5–125 (LLTIDPVDLQ…EETKLRVVYV (121 aa)). The segment at 123-174 (VYVAPPRPPSPVREGSEEGSSPRASVSDNGNASDFTAAPRFSADRVDAQDNS) is disordered. Residue Ser-132 is modified to Phosphoserine. A compositionally biased stretch (polar residues) spans 140–156 (EGSSPRASVSDNGNASD). Ser-164 carries the phosphoserine modification. Residues 169–215 (DAQDNSSEARALVTKLTEEKNSAVQLNNRLQQELDQLRRESKRSKSG) adopt a coiled-coil conformation. A helical; Anchor for type IV membrane protein membrane pass occupies residues 216–236 (GIPFMYVLLVGLIGLILGYIM).

It belongs to the VAMP-associated protein (VAP) (TC 9.B.17) family. As to quaternary structure, interacts with ORP3A. Binds to VLG at the endomembrane system.

The protein resides in the endoplasmic reticulum membrane. In terms of biological role, vesicle-associated protein that binds the oxysterol-binding protein ORP3A and allows its targeting to the ER. The chain is Vesicle-associated protein 1-2 from Arabidopsis thaliana (Mouse-ear cress).